Here is a 657-residue protein sequence, read N- to C-terminus: Protein FAM200B (657 aa).

Belongs to the FAM200 family.

The chain is Protein FAM200B from Homo sapiens (Human).